Reading from the N-terminus, the 275-residue chain is MASSTVSVVLSLFLLLLTQAYSADIQSFSFKNFNSSSFILQGDATVSSSKLRLTKVKGNGLPTLSSLGRAFYSSPIQIYDKSTGAVASWATSFTANIFAPNKSSSADGIAFALVPVGSEPKSNSGFLGVFDSDVYDNSAQTVAVEFDTFSNTDWDPTSRHIGIDVNSIKSIRTASWGLANGQNAEILITYNAATSLLVASLVHPSRRTSYIVSERVDITNELPEYVSIGFSATTGLSEGYTETHDVLSWSFASKLPDDSTTEPLDIASYLVRNVL.

An N-terminal signal peptide occupies residues 1–22 (MASSTVSVVLSLFLLLLTQAYS). N-linked (GlcNAc...) asparagine glycans are attached at residues Asn34 and Asn101.

The protein belongs to the leguminous lectin family. In terms of assembly, heterodimer, composed of an alpha and a beta subunit derived from a single precursor. In terms of processing, leu-264 is missing in a major portion of the beta subunit, suggesting an origin by sequential removal of amino acids rather than a processing by endoproteolytic cleavage.

Functionally, metalloglycoprotein, containing Ca, Mg, Mn, and Zn and the carbohydrates galactose, glucosamine, mannose, and fucose. It agglutinates erythrocytes of blood group A1. This Vigna unguiculata subsp. cylindrica (Horse gram) protein is Lectin DB58.